The primary structure comprises 27 residues: Paragonial peptide PS-1 (27 aa).

The segment covering 1–17 (DVPSANANANNQRTAAA) has biased composition (low complexity). Residues 1-27 (DVPSANANANNQRTAAAKPQANAEASS) are disordered.

Main cells of the accessory glands of males (paragonial gland).

Its subcellular location is the secreted. Its function is as follows. Represses female sexual receptivity and stimulates oviposition. This peptide has a low activity. The polypeptide is Paragonial peptide PS-1 (PapC) (Drosophila funebris (Fruit fly)).